The primary structure comprises 316 residues: UDP-N-acetylenolpyruvoylglucosamine reductase (316 aa).

One can recognise an FAD-binding PCMH-type domain in the interval 27 to 225 (VGGKAERFYR…KTAINALLKK (199 aa)). Arg190 is a catalytic residue. The active-site Proton donor is the Ser239. Glu309 is a catalytic residue.

The protein belongs to the MurB family. Requires FAD as cofactor.

It is found in the cytoplasm. It catalyses the reaction UDP-N-acetyl-alpha-D-muramate + NADP(+) = UDP-N-acetyl-3-O-(1-carboxyvinyl)-alpha-D-glucosamine + NADPH + H(+). It participates in cell wall biogenesis; peptidoglycan biosynthesis. Cell wall formation. The sequence is that of UDP-N-acetylenolpyruvoylglucosamine reductase from Coxiella burnetii (strain CbuK_Q154) (Coxiella burnetii (strain Q154)).